The following is a 66-amino-acid chain: MPQLDMSPWPMVIMSMILTLFYITQLKMLNFTFHTTPSSKLTMSHKHKTTWELKWTKIYLPPSTYQ.

Residues 8–24 (PWPMVIMSMILTLFYIT) traverse the membrane as a helical segment. An N6-acetyllysine; alternate modification is found at lysine 54. Position 54 is an N6-succinyllysine; alternate (lysine 54). Lysine 57 carries the N6-acetyllysine modification.

The protein belongs to the ATPase protein 8 family. F-type ATPases have 2 components, CF(1) - the catalytic core - and CF(0) - the membrane proton channel. Component of an ATP synthase complex composed of ATP5PB, ATP5MC1, ATP5F1E, ATP5PD, ATP5ME, ATP5PF, ATP5MF, MT-ATP6, MT-ATP8, ATP5F1A, ATP5F1B, ATP5F1D, ATP5F1C, ATP5PO, ATP5MG, ATP5MK and ATP5MJ. Interacts with PRICKLE3.

It localises to the mitochondrion membrane. Functionally, mitochondrial membrane ATP synthase (F(1)F(0) ATP synthase or Complex V) produces ATP from ADP in the presence of a proton gradient across the membrane which is generated by electron transport complexes of the respiratory chain. F-type ATPases consist of two structural domains, F(1) - containing the extramembraneous catalytic core and F(0) - containing the membrane proton channel, linked together by a central stalk and a peripheral stalk. During catalysis, ATP synthesis in the catalytic domain of F(1) is coupled via a rotary mechanism of the central stalk subunits to proton translocation. Part of the complex F(0) domain. Minor subunit located with subunit a in the membrane. The protein is ATP synthase protein 8 (MT-ATP8) of Alouatta guariba (Brown howler monkey).